Consider the following 352-residue polypeptide: Biotin synthase (352 aa).

In terms of domain architecture, Radical SAM core spans Asn-44–Lys-262. Residues Cys-59, Cys-63, and Cys-66 each contribute to the [4Fe-4S] cluster site. [2Fe-2S] cluster is bound by residues Cys-103, Cys-134, Cys-194, and Arg-266.

It belongs to the radical SAM superfamily. Biotin synthase family. As to quaternary structure, homodimer. It depends on [4Fe-4S] cluster as a cofactor. Requires [2Fe-2S] cluster as cofactor.

It carries out the reaction (4R,5S)-dethiobiotin + (sulfur carrier)-SH + 2 reduced [2Fe-2S]-[ferredoxin] + 2 S-adenosyl-L-methionine = (sulfur carrier)-H + biotin + 2 5'-deoxyadenosine + 2 L-methionine + 2 oxidized [2Fe-2S]-[ferredoxin]. Its pathway is cofactor biosynthesis; biotin biosynthesis; biotin from 7,8-diaminononanoate: step 2/2. Functionally, catalyzes the conversion of dethiobiotin (DTB) to biotin by the insertion of a sulfur atom into dethiobiotin via a radical-based mechanism. This is Biotin synthase from Pseudomonas aeruginosa (strain UCBPP-PA14).